The sequence spans 206 residues: Ras-related protein Rab7 (206 aa).

GTP-binding positions include 15–22 (GDSGVGKT), 63–67 (DTAGQ), and 125–128 (NKID). S-geranylgeranyl cysteine attachment occurs at residues Cys204 and Cys206. The residue at position 206 (Cys206) is a Cysteine methyl ester.

Belongs to the small GTPase superfamily. Rab family.

It localises to the cell membrane. Functionally, protein transport. Probably involved in vesicular traffic. The protein is Ras-related protein Rab7 of Pisum sativum (Garden pea).